A 554-amino-acid chain; its full sequence is CTP synthase (554 aa).

The segment at 1–265 (MTPLIFVTGG…DELVIDQFKL (265 aa)) is amidoligase domain. CTP is bound at residue serine 13. Serine 13 contacts UTP. ATP-binding positions include 14–19 (SLGKGI) and aspartate 71. Residues aspartate 71 and glutamate 139 each coordinate Mg(2+). CTP is bound by residues 146-148 (DIE), 186-191 (KTKPTQ), and lysine 222. Residues 186 to 191 (KTKPTQ) and lysine 222 each bind UTP. Residues 292-545 (TIAVVGKYVD…VRAAREKKAG (254 aa)) enclose the Glutamine amidotransferase type-1 domain. Glycine 353 lines the L-glutamine pocket. The active-site Nucleophile; for glutamine hydrolysis is the cysteine 380. Residues 381 to 384 (YGMQ), glutamate 404, and arginine 471 contribute to the L-glutamine site. Residues histidine 518 and glutamate 520 contribute to the active site.

This sequence belongs to the CTP synthase family. As to quaternary structure, homotetramer.

The catalysed reaction is UTP + L-glutamine + ATP + H2O = CTP + L-glutamate + ADP + phosphate + 2 H(+). It carries out the reaction L-glutamine + H2O = L-glutamate + NH4(+). It catalyses the reaction UTP + NH4(+) + ATP = CTP + ADP + phosphate + 2 H(+). The protein operates within pyrimidine metabolism; CTP biosynthesis via de novo pathway; CTP from UDP: step 2/2. With respect to regulation, allosterically activated by GTP, when glutamine is the substrate; GTP has no effect on the reaction when ammonia is the substrate. The allosteric effector GTP functions by stabilizing the protein conformation that binds the tetrahedral intermediate(s) formed during glutamine hydrolysis. Inhibited by the product CTP, via allosteric rather than competitive inhibition. Catalyzes the ATP-dependent amination of UTP to CTP with either L-glutamine or ammonia as the source of nitrogen. Regulates intracellular CTP levels through interactions with the four ribonucleotide triphosphates. This is CTP synthase from Xanthomonas campestris pv. campestris (strain 8004).